The following is a 257-amino-acid chain: Large ribosomal subunit protein bL28m (257 aa).

The transit peptide at 1 to 55 directs the protein to the mitochondrion; the sequence is MPLHRYPVHLWQKLRLRQGICARLPAHFLRSLEEERTPTPVHYKPHGTKFKINPK.

This sequence belongs to the bacterial ribosomal protein bL28 family. As to quaternary structure, component of the mitochondrial ribosome large subunit (39S) which comprises a 16S rRNA and about 50 distinct proteins. Interacts with OXA1L.

It localises to the mitochondrion. The polypeptide is Large ribosomal subunit protein bL28m (Mrpl28) (Mus musculus (Mouse)).